Consider the following 228-residue polypeptide: Cytidylate kinase (228 aa).

Residue 12 to 20 (GPASAGKST) participates in ATP binding.

The protein belongs to the cytidylate kinase family. Type 1 subfamily.

It is found in the cytoplasm. It carries out the reaction CMP + ATP = CDP + ADP. The enzyme catalyses dCMP + ATP = dCDP + ADP. The sequence is that of Cytidylate kinase from Lactiplantibacillus plantarum (strain ATCC BAA-793 / NCIMB 8826 / WCFS1) (Lactobacillus plantarum).